Here is a 405-residue protein sequence, read N- to C-terminus: S-adenosylmethionine synthase (405 aa).

139–144 (GKGSAD) is an ATP binding site.

This sequence belongs to the AdoMet synthase 2 family. Requires Mg(2+) as cofactor.

It carries out the reaction L-methionine + ATP + H2O = S-adenosyl-L-methionine + phosphate + diphosphate. It participates in amino-acid biosynthesis; S-adenosyl-L-methionine biosynthesis; S-adenosyl-L-methionine from L-methionine: step 1/1. In terms of biological role, catalyzes the formation of S-adenosylmethionine from methionine and ATP. This is S-adenosylmethionine synthase from Sulfurisphaera tokodaii (strain DSM 16993 / JCM 10545 / NBRC 100140 / 7) (Sulfolobus tokodaii).